Reading from the N-terminus, the 590-residue chain is Aspartate--tRNA(Asp/Asn) ligase (590 aa).

Position 173 (glutamate 173) interacts with L-aspartate. Positions 197–200 (QIFK) are aspartate. Arginine 219 serves as a coordination point for L-aspartate. ATP-binding positions include 219–221 (RDE) and glutamine 228. L-aspartate is bound at residue histidine 450. Glutamate 484 is a binding site for ATP. An L-aspartate-binding site is contributed by arginine 491. Residue 536–539 (GLDR) coordinates ATP.

It belongs to the class-II aminoacyl-tRNA synthetase family. Type 1 subfamily. As to quaternary structure, homodimer.

The protein resides in the cytoplasm. The enzyme catalyses tRNA(Asx) + L-aspartate + ATP = L-aspartyl-tRNA(Asx) + AMP + diphosphate. Functionally, aspartyl-tRNA synthetase with relaxed tRNA specificity since it is able to aspartylate not only its cognate tRNA(Asp) but also tRNA(Asn). Reaction proceeds in two steps: L-aspartate is first activated by ATP to form Asp-AMP and then transferred to the acceptor end of tRNA(Asp/Asn). The chain is Aspartate--tRNA(Asp/Asn) ligase from Coxiella burnetii (strain RSA 331 / Henzerling II).